Here is a 398-residue protein sequence, read N- to C-terminus: Probable L-tyrosine/L-aspartate decarboxylase (398 aa).

K242 carries the N6-(pyridoxal phosphate)lysine modification.

This sequence belongs to the group II decarboxylase family. MfnA subfamily. Requires pyridoxal 5'-phosphate as cofactor.

It carries out the reaction L-tyrosine + H(+) = tyramine + CO2. The enzyme catalyses L-aspartate + H(+) = beta-alanine + CO2. The protein operates within cofactor biosynthesis; methanofuran biosynthesis. It functions in the pathway cofactor biosynthesis; coenzyme A biosynthesis. Functionally, catalyzes the decarboxylation of L-tyrosine to produce tyramine for methanofuran biosynthesis. Can also catalyze the decarboxylation of L-aspartate to produce beta-alanine for coenzyme A (CoA) biosynthesis. The sequence is that of Probable L-tyrosine/L-aspartate decarboxylase from Methanosarcina mazei (strain ATCC BAA-159 / DSM 3647 / Goe1 / Go1 / JCM 11833 / OCM 88) (Methanosarcina frisia).